The chain runs to 213 residues: ATP-dependent Clp protease proteolytic subunit (213 aa).

Catalysis depends on serine 114, which acts as the Nucleophile. Residue histidine 139 is part of the active site.

The protein belongs to the peptidase S14 family. In terms of assembly, fourteen ClpP subunits assemble into 2 heptameric rings which stack back to back to give a disk-like structure with a central cavity, resembling the structure of eukaryotic proteasomes.

The protein resides in the cytoplasm. The catalysed reaction is Hydrolysis of proteins to small peptides in the presence of ATP and magnesium. alpha-casein is the usual test substrate. In the absence of ATP, only oligopeptides shorter than five residues are hydrolyzed (such as succinyl-Leu-Tyr-|-NHMec, and Leu-Tyr-Leu-|-Tyr-Trp, in which cleavage of the -Tyr-|-Leu- and -Tyr-|-Trp bonds also occurs).. In terms of biological role, cleaves peptides in various proteins in a process that requires ATP hydrolysis. Has a chymotrypsin-like activity. Plays a major role in the degradation of misfolded proteins. In Pseudomonas syringae pv. syringae (strain B728a), this protein is ATP-dependent Clp protease proteolytic subunit.